The following is a 481-amino-acid chain: Glutamate--tRNA ligase (481 aa).

The short motif at 11–21 (PSPTGLLHIGN) is the 'HIGH' region element. Positions 255 to 259 (KLSKR) match the 'KMSKS' region motif. Residue lysine 258 participates in ATP binding.

This sequence belongs to the class-I aminoacyl-tRNA synthetase family. Glutamate--tRNA ligase type 1 subfamily. In terms of assembly, monomer.

It localises to the cytoplasm. It catalyses the reaction tRNA(Glu) + L-glutamate + ATP = L-glutamyl-tRNA(Glu) + AMP + diphosphate. Its function is as follows. Catalyzes the attachment of glutamate to tRNA(Glu) in a two-step reaction: glutamate is first activated by ATP to form Glu-AMP and then transferred to the acceptor end of tRNA(Glu). This Streptococcus pyogenes serotype M3 (strain ATCC BAA-595 / MGAS315) protein is Glutamate--tRNA ligase.